The primary structure comprises 401 residues: Acetate kinase (401 aa).

Residue Asn-7 coordinates Mg(2+). Lys-14 contacts ATP. Substrate is bound at residue Arg-90. Residue Asp-147 is the Proton donor/acceptor of the active site. ATP-binding positions include His-207–Gly-211, Asp-282–Arg-284, and Gly-331–Asn-335. A Mg(2+)-binding site is contributed by Glu-385.

This sequence belongs to the acetokinase family. In terms of assembly, homodimer. Requires Mg(2+) as cofactor. The cofactor is Mn(2+).

It is found in the cytoplasm. The enzyme catalyses acetate + ATP = acetyl phosphate + ADP. Its pathway is metabolic intermediate biosynthesis; acetyl-CoA biosynthesis; acetyl-CoA from acetate: step 1/2. Functionally, catalyzes the formation of acetyl phosphate from acetate and ATP. Can also catalyze the reverse reaction. In Clostridium acetobutylicum (strain ATCC 824 / DSM 792 / JCM 1419 / IAM 19013 / LMG 5710 / NBRC 13948 / NRRL B-527 / VKM B-1787 / 2291 / W), this protein is Acetate kinase.